A 526-amino-acid polypeptide reads, in one-letter code: MRFRRYFSSTFKRLIDCNSCGVKLQNKQPGALGYYTKKDDNLVKKITLEDVKYLIFGQDIQRIKEMTVDTENYDIKLEKPLICKRCSEALHNNKYNATEFKDIPFEEVEKQIPLHSNVVHTAPILEFPFHINSQLLKNRTFNTTMVFTKADRVFKNKKQVQKQIPIFLDAFFETYLNSKATRNIVTSTLNRWNLDTLFSFLHGTNYFVGEPNSGKSTLINALLRRLFGVKIRGNDVKNFELDKQAEEELAVSKKFFLEKQLAGVSHIPNLTRTLQAYKIKQKIIYDLPGYSNYNSYRIDEFIDPKWLQRFRKTSIFSEKRVKKKRYDSIVGNENGKCLTLGGIFYLVPPPTTINQIVCYIPGELRQFHNTDRGIEVLGKSGSKEHPLNKYCGIKPGIGKEKYIRHIIPPFQGPIEVVLKDIGYFSLTPTGKYEYKGLYELWVLDGIDVCIRKPLERVAEDSYDKSQEGKYYIKEPVVSHTYVVAHNDPNPLQTVKESYEKVKERTDEILNKYNLEKFGNNMWHFKW.

A mitochondrion-targeting transit peptide spans 1–14; that stretch reads MRFRRYFSSTFKRL. The region spanning 105–293 is the CP-type G domain; sequence FEEVEKQIPL…IYDLPGYSNY (189 aa).

Belongs to the TRAFAC class YlqF/YawG GTPase family. GEP3 subfamily.

It is found in the mitochondrion. Functionally, may be involved in the mitochondrial lipid metabolism. This Candida glabrata (strain ATCC 2001 / BCRC 20586 / JCM 3761 / NBRC 0622 / NRRL Y-65 / CBS 138) (Yeast) protein is Genetic interactor of prohibitins 3, mitochondrial (GEP3).